The following is a 188-amino-acid chain: Elongation factor P (188 aa).

The protein belongs to the elongation factor P family.

Its subcellular location is the cytoplasm. The protein operates within protein biosynthesis; polypeptide chain elongation. Involved in peptide bond synthesis. Stimulates efficient translation and peptide-bond synthesis on native or reconstituted 70S ribosomes in vitro. Probably functions indirectly by altering the affinity of the ribosome for aminoacyl-tRNA, thus increasing their reactivity as acceptors for peptidyl transferase. The protein is Elongation factor P of Chloroherpeton thalassium (strain ATCC 35110 / GB-78).